Here is a 614-residue protein sequence, read N- to C-terminus: Fem-3 mRNA-binding factor 1 (614 aa).

The segment covering 1–24 (MDQSKMRYTNQFRKTPQKPTSTEV) has biased composition (polar residues). Residues 1–34 (MDQSKMRYTNQFRKTPQKPTSTEVGNHHTPAHSP) are disordered. Residues 160 to 564 (TRSNNVLPTW…KMIETLAHLR (405 aa)) form the PUM-HD domain. 8 Pumilio repeats span residues 185-223 (EVLD…QLFE), 224-263 (QVIG…NIKR), 269-305 (NFIS…KLVQ), 306-342 (ALPR…EFIV), 343-382 (DFVA…DLTS), 398-434 (SVTN…CIIE), 436-471 (CLMR…EMMD), and 483-519 (TGKD…RQTK). A binding to gld-3 isoform A region spans residues 283–614 (FACRVIQSSL…NLRLMRTFSP (332 aa)).

As to quaternary structure, interacts (via C-terminus) with gld-3 isoform A in an RNA-independent manner. In terms of tissue distribution, expressed specifically in the germline (at protein level).

Its subcellular location is the cytoplasm. Functionally, RNA-binding protein that binds to the consensus sequence 5'-UGUGCCAUA-3' in mRNA 3'-UTRs. Involved in the control of stem cells and sex determination in the C.elegans hermaphrodite germline. May also play a role in the hermaphrodite germline proliferation and oogenesis. Binds specifically to the regulatory region of fem-3 3'-UTR and mediates the sperm/oocyte switch. Negatively regulates gld-3 expression, possibly by directly binding to two sites within the 3'-UTR of gld-3 isoform b. In association with the cye-1/cdk-2 complex, negatively regulates gld-1 expression in the distal germline cells of the mitotic zone. By binding to the 3'-UTR, represses phosphatase lip-1 expression in the distal part of the germline mitotic zone. Suppresses germline tumor formation by preventing the dedifferentiation of secondary spermatocytes. The protein is Fem-3 mRNA-binding factor 1 (fbf-1) of Caenorhabditis elegans.